An 808-amino-acid chain; its full sequence is Envelope glycoprotein H (808 aa).

Residues 1 to 17 (MKFYCLIRFMIIANLYS) form the signal peptide. The Virion surface portion of the chain corresponds to 18-761 (SYQISLPGTY…ESERVTIISA (744 aa)). Asn44, Asn60, Asn114, Asn240, Asn272, Asn431, Asn461, Asn719, and Asn742 each carry an N-linked (GlcNAc...) asparagine; by host glycan. The tract at residues 205 to 266 (AGMEILMKMG…GTGRPHWIYL (62 aa)) is interaction with gL. A helical transmembrane segment spans residues 762–782 (TYIATAVAGSIIALTVIVITV). The Intravirion segment spans residues 783 to 808 (RMIIINMRYNYQGYNKVIDVDDDIRN).

The protein belongs to the herpesviridae glycoprotein H family. Interacts with glycoprotein L (gL); this interaction is necessary for the correct processing and cell surface expression of gH. The heterodimer gH/gL seems to interact with gB trimers during fusion. N-glycosylated, O-glycosylated, and sialylated.

The protein localises to the virion membrane. Its subcellular location is the host cell membrane. It localises to the host endosome membrane. Functionally, the heterodimer glycoprotein H-glycoprotein L is required for the fusion of viral and plasma membranes leading to virus entry into the host cell. Following initial binding to host receptor, membrane fusion is mediated by the fusion machinery composed of gB and the heterodimer gH/gL. May also be involved in the fusion between the virion envelope and the outer nuclear membrane during virion morphogenesis. The chain is Envelope glycoprotein H from Gallus gallus (Chicken).